The following is a 351-amino-acid chain: Dual-specificity RNA methyltransferase RlmN (351 aa).

Catalysis depends on glutamate 90, which acts as the Proton acceptor. The region spanning 96-330 is the Radical SAM core domain; the sequence is EKDHYTACLS…ATLRKSKGSD (235 aa). A disulfide bridge connects residues cysteine 103 and cysteine 335. The [4Fe-4S] cluster site is built by cysteine 110, cysteine 114, and cysteine 117. S-adenosyl-L-methionine-binding positions include 162 to 163, serine 194, 216 to 218, and asparagine 292; these read GE and SLH. Cysteine 335 serves as the catalytic S-methylcysteine intermediate.

Belongs to the radical SAM superfamily. RlmN family. [4Fe-4S] cluster is required as a cofactor.

The protein resides in the cytoplasm. It catalyses the reaction adenosine(2503) in 23S rRNA + 2 reduced [2Fe-2S]-[ferredoxin] + 2 S-adenosyl-L-methionine = 2-methyladenosine(2503) in 23S rRNA + 5'-deoxyadenosine + L-methionine + 2 oxidized [2Fe-2S]-[ferredoxin] + S-adenosyl-L-homocysteine. It carries out the reaction adenosine(37) in tRNA + 2 reduced [2Fe-2S]-[ferredoxin] + 2 S-adenosyl-L-methionine = 2-methyladenosine(37) in tRNA + 5'-deoxyadenosine + L-methionine + 2 oxidized [2Fe-2S]-[ferredoxin] + S-adenosyl-L-homocysteine. Specifically methylates position 2 of adenine 2503 in 23S rRNA and position 2 of adenine 37 in tRNAs. m2A2503 modification seems to play a crucial role in the proofreading step occurring at the peptidyl transferase center and thus would serve to optimize ribosomal fidelity. The polypeptide is Dual-specificity RNA methyltransferase RlmN (Solidesulfovibrio magneticus (strain ATCC 700980 / DSM 13731 / RS-1) (Desulfovibrio magneticus)).